Consider the following 532-residue polypeptide: uncharacterized protein (532 aa).

5 helical membrane passes run 11-31 (YLSHGLVIHMIINGIVLALII), 51-71 (IEPFVLLVLMELISGIQKIFF), 126-146 (LIDILTYQSSHLFAFIGYTLW), 147-167 (ILYNSPITLTIYILLIPIIVF), and 231-253 (YVESINLAITLLTRFNLLIVLLI). The 217-residue stretch at 315-531 (ICINKLVYEY…MIIPMNNGII (217 aa)) folds into the ABC transporter domain. Residue 349-356 (GKSGSGKS) participates in ATP binding.

It is found in the membrane. This is an uncharacterized protein from Acanthamoeba polyphaga mimivirus (APMV).